Consider the following 207-residue polypeptide: Sodium/potassium-transporting ATPase subunit beta-1-interacting protein 1 (207 aa).

The first 21 residues, 1–21 (MGKCSGRCTLVAFCCLQLVAA), serve as a signal peptide directing secretion. Topologically, residues 22-34 (LERQIFDFLGYQW) are extracellular. A helical membrane pass occupies residues 35–55 (APILANFLHIMAVILGIFGTV). Residues 56 to 61 (QYRSRY) are Cytoplasmic-facing. A helical transmembrane segment spans residues 62–82 (LILYAAWLVLWVGWNAFIICF). The Extracellular portion of the chain corresponds to 83-146 (YLEVGQLSQD…GCLLDYPYIE (64 aa)). The N-linked (GlcNAc...) asparagine glycan is linked to Asn-100. The helical transmembrane segment at 147-167 (ALSSALQIFLALFGFVFACYV) threads the bilayer. Over 168–207 (SKVFLEEEDSFDFIGGFDSYGYQAPQKTSHLQLQPLYTSG) the chain is Cytoplasmic.

It belongs to the NKAIN family. As to quaternary structure, interacts with ATP1B1 C-terminus.

It localises to the cell membrane. The sequence is that of Sodium/potassium-transporting ATPase subunit beta-1-interacting protein 1 (NKAIN1) from Homo sapiens (Human).